We begin with the raw amino-acid sequence, 406 residues long: WD repeat and SOCS box-containing protein 2 (406 aa).

Positions 70 to 89 (AKSRSSKNETKGRGSPKEKT) are disordered. WD repeat units lie at residues 107–150 (PPSK…LLLN), 153–193 (GHQD…KQIQ), 197–236 (GHLQ…LIRK), 239–278 (GHQS…RLRS), and 293–332 (VHIS…PIAF). Residues 358–406 (HVQFWTAPRVLSSLKHLCRKALRSFLTTYQVLALPIPKKMKEFLTYRTF) enclose the SOCS box domain.

It participates in protein modification; protein ubiquitination. In terms of biological role, may be a substrate-recognition component of a SCF-like ECS (Elongin-Cullin-SOCS-box protein) E3 ubiquitin ligase complex which mediates the ubiquitination and subsequent proteasomal degradation of target proteins. In Bos taurus (Bovine), this protein is WD repeat and SOCS box-containing protein 2 (WSB2).